Consider the following 262-residue polypeptide: Acyl-[acyl-carrier-protein]--UDP-N-acetylglucosamine O-acyltransferase (262 aa).

It belongs to the transferase hexapeptide repeat family. LpxA subfamily. Homotrimer.

It is found in the cytoplasm. It catalyses the reaction a (3R)-hydroxyacyl-[ACP] + UDP-N-acetyl-alpha-D-glucosamine = a UDP-3-O-[(3R)-3-hydroxyacyl]-N-acetyl-alpha-D-glucosamine + holo-[ACP]. The protein operates within glycolipid biosynthesis; lipid IV(A) biosynthesis; lipid IV(A) from (3R)-3-hydroxytetradecanoyl-[acyl-carrier-protein] and UDP-N-acetyl-alpha-D-glucosamine: step 1/6. Its function is as follows. Involved in the biosynthesis of lipid A, a phosphorylated glycolipid that anchors the lipopolysaccharide to the outer membrane of the cell. In Herminiimonas arsenicoxydans, this protein is Acyl-[acyl-carrier-protein]--UDP-N-acetylglucosamine O-acyltransferase.